Reading from the N-terminus, the 490-residue chain is MTIGRMENVEVFTAEGKGRGLKATKEFWAADIIFAERAYSAVVFDSLVNFVCHTCFKRQEKLHRCGQCKFAHYCDRTCQKDAWLNHKNECSAIKRYGKVPNENIRLAARIMWRVEREGTGLTEGCLVSVDDLQNHVEHFGEEEQKDLRVDVDTFLQYWPPQSQQFSMQYISHIFGVINCNGFTLSDQRGLQAVGVGIFPNLGLVNHDCWPNCTVIFNNGNHEAVKSMFHTQMRIELRALGKISEGEELTVSYIDFLNVSEERKRQLKKQYYFDCTCEHCQKKLKDDLFLGVKDNPKPSQEVVKEMIQFSKDTLEKIDKARSEGLYHEVVKLCRECLEKQEPVFADTNIYMLRMLSIVSEVLSYLQAFEEASFYARRMVDGYMKLYHPNNAQLGMAVMRAGLTNWHAGNIEVGHGMICKAYAILLVTHGPSHPITKDLEAMRVQTEMELRMFRQNEFMYYKMREAALNNQPMQVMAEPSNEPSPALFHKKQ.

Residues 7–253 (ENVEVFTAEG…EGEELTVSYI (247 aa)) form the SET domain. 17 to 19 (KGR) is an S-adenosyl-L-methionine binding site. Zn(2+) contacts are provided by C52, C55, C65, C68, C74, C78, H86, and C90. An MYND-type zinc finger spans residues 52–90 (CHTCFKRQEKLHRCGQCKFAHYCDRTCQKDAWLNHKNEC). S-adenosyl-L-methionine-binding positions include H135 and 205-206 (NH). Zn(2+) is bound at residue C208. 270–272 (YYF) is a binding site for S-adenosyl-L-methionine. C274, C276, and C279 together coordinate Zn(2+).

Belongs to the class V-like SAM-binding methyltransferase superfamily. As to quaternary structure, interacts with HDAC1, HDAC2 and HDAC3. Interacts (via MYND-type zinc finger) with NACA isoform skNAC. In terms of tissue distribution, expression seems mostly restricted to heart and skeletal muscle.

It is found in the cytoplasm. It localises to the nucleus. The catalysed reaction is L-lysyl(4)-[histone H3] + 3 S-adenosyl-L-methionine = N(6),N(6),N(6)-trimethyl-L-lysyl(4)-[histone H3] + 3 S-adenosyl-L-homocysteine + 3 H(+). Its function is as follows. Methylates histone H3 at 'Lys-4' (H3K4me), seems able to perform both mono-, di-, and trimethylation. Acts as a transcriptional repressor. Essential for cardiomyocyte differentiation and cardiac morphogenesis. The chain is Histone-lysine N-methyltransferase SMYD1 (SMYD1) from Homo sapiens (Human).